The primary structure comprises 332 residues: MSDAKKKAAAELAAKNLAQLQKIDIAASKILDKMPFAAIYHIDAARKEWNQSNCEGTFFVYQRADRPYFSFLIANRNDPSDFIEPLTLNHILRHDGNFIYFYKDLASIQALWFHQIDDAQKIYNLLQKLVNRLKGSTTEQARAAKAASEAPQASVPAPTQAPAAPAQAPQMAPQAPPKVDLLQLIKSAQNPPQKSAATIEQMPPMLQKLMLKEPGAAMSADELEKDLIKSAKPHRNHLLQEFTNSTSAISLAAVSTKPLHGSEGDVESDIAEGEILEPLDASFVVGSGEQTPVLNKEQFISAIAHLMQTDDEFVSQIHQAYVSALNRRLNID.

Residues 141–173 show a composition bias toward low complexity; it reads ARAAKAASEAPQASVPAPTQAPAAPAQAPQMAP. A disordered region spans residues 141–175; sequence ARAAKAASEAPQASVPAPTQAPAAPAQAPQMAPQA.

It belongs to the DCP1 family. May be a component of the decapping complex composed of dcap-1 and dcap-2. As to expression, expressed in neurons including touch receptor neurons and motor neurons.

The protein resides in the cytoplasm. It is found in the cytoplasmic granule. In terms of biological role, component of the decapping complex necessary for the degradation of mRNAs, both in normal mRNA turnover and in nonsense-mediated mRNA decay. In contrast to orthologs, does not possess decapping activity and does not remove the 7-methyl guanine cap structure from mRNA molecules. In the nervous system, negatively regulates the expression of insulin-like peptide ins-7, which in turn promotes longevity. This may in part be through promoting the activity of daf-16 in distal tissues. Required for the developmental axon guidance and regrowth of PLM touch receptor neurons. In ADL sensory neurons, plays a role in ciliary shape formation. Acts in neurons to promote larval survival at high temperatures by negatively regulating lin-14 expression. This chain is mRNA-decapping enzyme 1, found in Caenorhabditis elegans.